The sequence spans 268 residues: UPF0328 protein ECU09_2030 (268 aa).

This sequence belongs to the UPF0328 family.

The protein is UPF0328 protein ECU09_2030 of Encephalitozoon cuniculi (strain GB-M1) (Microsporidian parasite).